A 303-amino-acid chain; its full sequence is Mitochondrial basic amino acids transporter (303 aa).

A run of 6 helical transmembrane segments spans residues 2–22 (ALDF…GHPF), 61–81 (GLGS…GVQG), 96–116 (FLAG…MELA), 153–172 (GMVS…FLTY), 187–207 (LLVP…WLST), and 255–275 (LLRA…VLTY). Solcar repeat units follow at residues 2-86 (ALDF…TLRA), 90-178 (DSPL…LTRA), and 185-275 (DRLL…VLTY). Residues 282–303 (GPEGEAVPAAPAGPALAQPSSL) are disordered. Over residues 284–303 (EGEAVPAAPAGPALAQPSSL) the composition is skewed to low complexity.

This sequence belongs to the mitochondrial carrier (TC 2.A.29) family.

Its subcellular location is the mitochondrion inner membrane. It carries out the reaction L-lysine(out) + L-arginine(in) = L-lysine(in) + L-arginine(out). The enzyme catalyses L-histidine(out) + L-arginine(in) = L-histidine(in) + L-arginine(out). It catalyses the reaction L-ornithine(in) + L-arginine(out) = L-ornithine(out) + L-arginine(in). The catalysed reaction is L-homoarginine(in) + L-arginine(out) = L-homoarginine(out) + L-arginine(in). It carries out the reaction N(omega)-methyl-L-arginine(in) + L-arginine(out) = N(omega)-methyl-L-arginine(out) + L-arginine(in). The enzyme catalyses L-arginine(in) = L-arginine(out). It catalyses the reaction L-lysine(in) = L-lysine(out). The catalysed reaction is L-ornithine(in) = L-ornithine(out). It carries out the reaction L-histidine(out) = L-histidine(in). Mitochondrial transporter of arginine, lysine, homoarginine, methylarginine and, to a much lesser extent, ornithine and histidine. Does not transport carnitine nor acylcarnitines. Functions by both counter-exchange and uniport mechanisms. Plays a physiological role in the import of basic amino acids into mitochondria for mitochondrial protein synthesis and amino acid degradation. This is Mitochondrial basic amino acids transporter from Homo sapiens (Human).